A 191-amino-acid polypeptide reads, in one-letter code: Adenine phosphoribosyltransferase (191 aa).

Belongs to the purine/pyrimidine phosphoribosyltransferase family. As to quaternary structure, homodimer.

It is found in the cytoplasm. The catalysed reaction is AMP + diphosphate = 5-phospho-alpha-D-ribose 1-diphosphate + adenine. It functions in the pathway purine metabolism; AMP biosynthesis via salvage pathway; AMP from adenine: step 1/1. Catalyzes a salvage reaction resulting in the formation of AMP, that is energically less costly than de novo synthesis. This chain is Adenine phosphoribosyltransferase, found in Bordetella bronchiseptica (strain ATCC BAA-588 / NCTC 13252 / RB50) (Alcaligenes bronchisepticus).